Consider the following 149-residue polypeptide: 3-dehydroquinate dehydratase (149 aa).

Catalysis depends on Tyr22, which acts as the Proton acceptor. Substrate is bound by residues Asn74, His80, and Asp87. The active-site Proton donor is His100. Substrate contacts are provided by residues Met101 to Ser102 and Arg111.

The protein belongs to the type-II 3-dehydroquinase family. As to quaternary structure, homododecamer.

The catalysed reaction is 3-dehydroquinate = 3-dehydroshikimate + H2O. Its pathway is metabolic intermediate biosynthesis; chorismate biosynthesis; chorismate from D-erythrose 4-phosphate and phosphoenolpyruvate: step 3/7. Its function is as follows. Catalyzes a trans-dehydration via an enolate intermediate. The protein is 3-dehydroquinate dehydratase of Leptothrix cholodnii (strain ATCC 51168 / LMG 8142 / SP-6) (Leptothrix discophora (strain SP-6)).